We begin with the raw amino-acid sequence, 287 residues long: Elongation factor Ts (287 aa).

The interval 80 to 83 is involved in Mg(2+) ion dislocation from EF-Tu; it reads TDFL.

This sequence belongs to the EF-Ts family.

Its subcellular location is the cytoplasm. In terms of biological role, associates with the EF-Tu.GDP complex and induces the exchange of GDP to GTP. It remains bound to the aminoacyl-tRNA.EF-Tu.GTP complex up to the GTP hydrolysis stage on the ribosome. This chain is Elongation factor Ts, found in Pseudomonas savastanoi pv. phaseolicola (strain 1448A / Race 6) (Pseudomonas syringae pv. phaseolicola (strain 1448A / Race 6)).